Consider the following 260-residue polypeptide: Phosphate import ATP-binding protein PstB 1 (260 aa).

The region spanning 8–255 is the ABC transporter domain; that stretch reads TETKNVYDVL…PEHKRTEDYV (248 aa). Position 46-53 (46-53) interacts with ATP; that stretch reads GPSGCGKS.

This sequence belongs to the ABC transporter superfamily. Phosphate importer (TC 3.A.1.7) family. The complex is composed of two ATP-binding proteins (PstB), two transmembrane proteins (PstC and PstA) and a solute-binding protein (PstS).

The protein localises to the cell membrane. The catalysed reaction is phosphate(out) + ATP + H2O = ADP + 2 phosphate(in) + H(+). Functionally, part of the ABC transporter complex PstSACB involved in phosphate import. Responsible for energy coupling to the transport system. The protein is Phosphate import ATP-binding protein PstB 1 of Shouchella clausii (strain KSM-K16) (Alkalihalobacillus clausii).